A 394-amino-acid polypeptide reads, in one-letter code: Elongation factor Tu 1 (394 aa).

The tr-type G domain maps to 10-204; sequence KPHVNVGTIG…ALDSYIPEPQ (195 aa). Residues 19–26 are G1; it reads GHVDHGKT. 19 to 26 is a binding site for GTP; that stretch reads GHVDHGKT. Thr-26 is a binding site for Mg(2+). The interval 60 to 64 is G2; it reads GITIN. Residues 81–84 form a G3 region; sequence DCPG. GTP contacts are provided by residues 81 to 85 and 136 to 139; these read DCPGH and NKCD. The G4 stretch occupies residues 136–139; the sequence is NKCD. The segment at 174–176 is G5; the sequence is SAL.

It belongs to the TRAFAC class translation factor GTPase superfamily. Classic translation factor GTPase family. EF-Tu/EF-1A subfamily. As to quaternary structure, monomer.

It localises to the cytoplasm. It carries out the reaction GTP + H2O = GDP + phosphate + H(+). In terms of biological role, GTP hydrolase that promotes the GTP-dependent binding of aminoacyl-tRNA to the A-site of ribosomes during protein biosynthesis. The protein is Elongation factor Tu 1 of Shewanella baltica (strain OS195).